The sequence spans 67 residues: DNA-directed RNA polymerase subunit omega (67 aa).

The protein belongs to the RNA polymerase subunit omega family. As to quaternary structure, the RNAP catalytic core consists of 2 alpha, 1 beta, 1 beta' and 1 omega subunit. When a sigma factor is associated with the core the holoenzyme is formed, which can initiate transcription.

The enzyme catalyses RNA(n) + a ribonucleoside 5'-triphosphate = RNA(n+1) + diphosphate. Promotes RNA polymerase assembly. Latches the N- and C-terminal regions of the beta' subunit thereby facilitating its interaction with the beta and alpha subunits. The polypeptide is DNA-directed RNA polymerase subunit omega (Bacillus velezensis (strain DSM 23117 / BGSC 10A6 / LMG 26770 / FZB42) (Bacillus amyloliquefaciens subsp. plantarum)).